The sequence spans 230 residues: Peptidyl-prolyl cis-trans isomerase FKBP16-4, chloroplastic (230 aa).

The transit peptide at 1 to 56 (MILTMKLVHPLHHSLSSSIPFPSRKRQSKPYRCSLPSPGCEKVIRTETVLPPAPVS) directs the protein to the chloroplast. The region spanning 123 to 217 (GSRVAVHYVA…ELDIELLSIK (95 aa)) is the PPIase FKBP-type domain.

The protein belongs to the FKBP-type PPIase family.

It localises to the plastid. It is found in the chloroplast thylakoid lumen. It carries out the reaction [protein]-peptidylproline (omega=180) = [protein]-peptidylproline (omega=0). PPIases accelerate the folding of proteins. It catalyzes the cis-trans isomerization of proline imidic peptide bonds in oligopeptides. This chain is Peptidyl-prolyl cis-trans isomerase FKBP16-4, chloroplastic (FKBP16-4), found in Arabidopsis thaliana (Mouse-ear cress).